Consider the following 853-residue polypeptide: Deubiquitinase otu (853 aa).

The interval 1-20 (MDMQVQRPITSGSRQAPDPY) is disordered. An OTU domain is found at 29–150 (LYRKHTARDA…ENHFDSVYDV (122 aa)). The active site involves D37. The active-site Nucleophile is the S40. H143 is a catalytic residue. The 61-residue stretch at 336–396 (NFKVGAKCKV…HPLPPDEYRP (61 aa)) folds into the Tudor domain. Residues 396–853 (PWSLPFRYHR…AAVYAATRHH (458 aa)) are LC domain. Over residues 460–470 (QDDEQRDHNDP) the composition is skewed to basic and acidic residues. Disordered stretches follow at residues 460-531 (QDDE…YVPM), 681-704 (AVES…LEKS), 732-794 (GPAA…AAQG), and 817-853 (NMDP…TRHH). A compositionally biased stretch (low complexity) spans 499–517 (SRVQPQNSSSSQNQEVSGS). Positions 747–758 (NGSQFSFYTTPS) are enriched in polar residues. Residues 769–778 (LLQPPPPPPI) show a composition bias toward pro residues. Low complexity-rich tracts occupy residues 783–794 (AGPPQLGGAAQG) and 820–838 (PSAQ…APLS).

In terms of assembly, self aggregates, forming amyloid-like fibrillar helical structures; protein aggregation is mediated by the C-terminal LC domain, is enhanced by RNA binding and is essential for deubiquitinase activity. Interacts (via OTU domain) with bam (via C-terminus); the interaction enhances otu aggregation and deubiquitinase activity. Together with bam interacts with CycA/cyclin-A; the interaction stabilizes CycA by promoting its deubiquitination. Together with bam interacts with Traf6. Interacts with Hrb27C; the interaction is RNA-independent. Associates (via N-terminus) with mRNP complexes; the interaction is weak. As to expression, expressed at high levels in the ovary, at low levels in the brain and fat body, and at moderate levels in the gut.

It localises to the cytoplasm. The protein resides in the cell cortex. Its subcellular location is the perinuclear region. With respect to regulation, activated by protein aggregation, which is mediated by the LC domain and enhanced by RNA binding. Functionally, catalytic component of a deubiquitinase complex consisting of bam and otu. The complex deubiquitinates K63-linked polyubiquitinated proteins; this antagonizes the ubiquitination activity of Traf6 and regulates the IMD immune signaling pathway. Otu-bam deubiquitinase activity is regulated by Traf6 dependent immune signaling regulation of bam expression levels; this forms a feedback loop that regulates the IMD immune signaling pathway and balances gut immune activity during aging. The complex deubiquitinates and stabilizes CycA/cyclin-A to regulate CycA-dependent differentiation. Involved in grk mRNA localization to the dorsal anterior region of the oocyte required for dorsal-ventral axis determination; may function as a ribonuclear protein complex together with sqd and Hrb27C. May regulate actin cytoskeleton organization in differentiating cystocytes during fusome maturation; required for efficient nurse cell cytoplasmic dumping during oogenesis. Essential for female fertility; involved in germ cell proliferation and germ cell differentiation. Its function is as follows. Involved in the early stages of germ cell proliferation and differentiation during oogenesis. Required for polytene chromosome dispersal in nurse cells during oogenesis. In terms of biological role, involved in the later stages of germ cell proliferation and differentiation during oogenesis. This is Deubiquitinase otu from Drosophila melanogaster (Fruit fly).